Consider the following 359-residue polypeptide: Chaperone protein DnaJ (359 aa).

The J domain maps to 3–68 (DYYEILGVPK…ERRQTYDRYG (66 aa)). The CR-type zinc finger occupies 128-205 (GVSKDIKYKI…CAGKGFIEEQ (78 aa)). Residues C141, C144, C157, C160, C179, C182, C193, and C196 each contribute to the Zn(2+) site. CXXCXGXG motif repeat units follow at residues 141 to 148 (CKTCDGTG), 157 to 164 (CPYCGGSG), 179 to 186 (CPFCKGSG), and 193 to 200 (CHDCAGKG).

This sequence belongs to the DnaJ family. In terms of assembly, homodimer. Zn(2+) is required as a cofactor.

Its subcellular location is the cytoplasm. In terms of biological role, participates actively in the response to hyperosmotic and heat shock by preventing the aggregation of stress-denatured proteins and by disaggregating proteins, also in an autonomous, DnaK-independent fashion. Unfolded proteins bind initially to DnaJ; upon interaction with the DnaJ-bound protein, DnaK hydrolyzes its bound ATP, resulting in the formation of a stable complex. GrpE releases ADP from DnaK; ATP binding to DnaK triggers the release of the substrate protein, thus completing the reaction cycle. Several rounds of ATP-dependent interactions between DnaJ, DnaK and GrpE are required for fully efficient folding. Also involved, together with DnaK and GrpE, in the DNA replication of plasmids through activation of initiation proteins. The sequence is that of Chaperone protein DnaJ from Campylobacter hominis (strain ATCC BAA-381 / DSM 21671 / CCUG 45161 / LMG 19568 / NCTC 13146 / CH001A).